We begin with the raw amino-acid sequence, 413 residues long: MDHLKRQDEKVFAAIEAELGRQRSKIELIASENFVSEAVMEAQGSVLTNKYAEGYPGKRYYGGCEHVDVVEDIARDRVKEIFGAEHVNVQPHSGAQANMAVYFTILEQGDTVLGMNLSHGGHLTHGSPVNFSGVQYNFVEYGVDAESHRINYDDVLAKAKEHKPKLIVAGASAYPRVIDFKRFREIADEVGAYLMVDMAHIAGLVAAGLHPNPVPHAHFVTTTTHKTLRGPRGGMILCEEQFAKQIDKSIFPGIQGGPLMHVIAAKAVAFGEALQDDFKTYAQNIINNANRLAEGLQKEGLTLVSGGTDNHLILIDVRNLEITGKVAEHVLDEVGITVNKNTIPFETASPFVTSGVRIGTAAVTSRGFGLEDMDEIASLIAYTLKNHENEAALEEARKRVEALTSKFPMYTDL.

Residues L117 and 121–123 (GHL) contribute to the (6S)-5,6,7,8-tetrahydrofolate site. K226 is modified (N6-(pyridoxal phosphate)lysine). (6S)-5,6,7,8-tetrahydrofolate contacts are provided by residues E239 and 349–351 (SPF).

Belongs to the SHMT family. In terms of assembly, homodimer. Requires pyridoxal 5'-phosphate as cofactor.

The protein localises to the cytoplasm. The catalysed reaction is (6R)-5,10-methylene-5,6,7,8-tetrahydrofolate + glycine + H2O = (6S)-5,6,7,8-tetrahydrofolate + L-serine. The protein operates within one-carbon metabolism; tetrahydrofolate interconversion. Its pathway is amino-acid biosynthesis; glycine biosynthesis; glycine from L-serine: step 1/1. Catalyzes the reversible interconversion of serine and glycine with tetrahydrofolate (THF) serving as the one-carbon carrier. This reaction serves as the major source of one-carbon groups required for the biosynthesis of purines, thymidylate, methionine, and other important biomolecules. Also exhibits THF-independent aldolase activity toward beta-hydroxyamino acids, producing glycine and aldehydes, via a retro-aldol mechanism. The sequence is that of Serine hydroxymethyltransferase from Bacillus cereus (strain AH820).